The sequence spans 310 residues: Small ribosomal subunit biogenesis GTPase RsgA (310 aa).

The region spanning 77 to 238 (LSKQSHILAA…IIDTPGIKGF (162 aa)) is the CP-type G domain. Residues 126–129 (NKVD) and 180–188 (GHSGVGKST) contribute to the GTP site. Zn(2+) contacts are provided by Cys262, Cys267, His269, and Cys275.

It belongs to the TRAFAC class YlqF/YawG GTPase family. RsgA subfamily. Monomer. Associates with 30S ribosomal subunit, binds 16S rRNA. Requires Zn(2+) as cofactor.

The protein resides in the cytoplasm. Its function is as follows. One of several proteins that assist in the late maturation steps of the functional core of the 30S ribosomal subunit. Helps release RbfA from mature subunits. May play a role in the assembly of ribosomal proteins into the subunit. Circularly permuted GTPase that catalyzes slow GTP hydrolysis, GTPase activity is stimulated by the 30S ribosomal subunit. This is Small ribosomal subunit biogenesis GTPase RsgA from Bacteroides fragilis (strain YCH46).